Here is a 761-residue protein sequence, read N- to C-terminus: Zinc finger protein 711 (761 aa).

Residues Lys224, Lys235, and Lys296 each participate in a glycyl lysine isopeptide (Lys-Gly) (interchain with G-Cter in SUMO2) cross-link. C2H2-type zinc fingers lie at residues 383–408, 414–436, 476–499, 505–527, and 533–556; these read YPCH…HPDH, YQCT…LESH, HKCK…LAVH, HVCV…MRTH, and YQCQ…KSKH. The segment at 562–584 adopts a C2H2-type 6; atypical zinc-finger fold; the sequence is YKCEHCPQAFGDERELQRHLDLF. Residues Cys564, Cys567, and His580 each coordinate Zn(2+). 6 C2H2-type zinc fingers span residues 590 to 613, 619 to 641, 647 to 670, 676 to 698, 704 to 727, and 733 to 755; these read HQCP…ISVH, HKCE…SDIH, HQCR…LSVH, LKCK…MKTH, YQCE…ISIH, and HRCE…IMRH.

This sequence belongs to the krueppel C2H2-type zinc-finger protein family. As to quaternary structure, interacts with PHF8.

Its subcellular location is the nucleus. Transcription regulator required for brain development. Probably acts as a transcription factor that binds to the promoter of target genes and recruits PHF8 histone demethylase, leading to activated expression of genes involved in neuron development, such as KDM5C. May compete with transcription factor ARX for activation of expression of KDM5C. The polypeptide is Zinc finger protein 711 (Znf711) (Mus musculus (Mouse)).